The primary structure comprises 229 residues: MPILKNDWAPLLEEEFQKPYYLKLREFLKEEYRTRTIYPDMHDIFNALHYTPYANVKVVLLGQDPYHGPGQAHGLSFSVKPGVPVPPSLANIFKELHDDLGCYIPDNGYLVKWAEQGVLLLNTVLTVRRGQANSHRGKGWEYFTDRVIELVNEKDDPVVFLLWGRNAQEKKERITNPRHLIIEAPHPSPFSAARGFFGHRPFSRTNAFLTKHGREPIDWQIENIGARAE.

Asp-64 functions as the Proton acceptor in the catalytic mechanism.

The protein belongs to the uracil-DNA glycosylase (UDG) superfamily. UNG family.

Its subcellular location is the cytoplasm. It carries out the reaction Hydrolyzes single-stranded DNA or mismatched double-stranded DNA and polynucleotides, releasing free uracil.. In terms of biological role, excises uracil residues from the DNA which can arise as a result of misincorporation of dUMP residues by DNA polymerase or due to deamination of cytosine. The polypeptide is Uracil-DNA glycosylase (Geobacillus kaustophilus (strain HTA426)).